A 410-amino-acid chain; its full sequence is Cytochrome P450(MEG) (410 aa).

A heme-binding site is contributed by C355.

The protein belongs to the cytochrome P450 family. It depends on heme as a cofactor.

Its subcellular location is the cytoplasm. The catalysed reaction is reduced 2[4Fe-4S]-[ferredoxin] + progesterone + O2 + 2 H(+) = 15beta-hydroxyprogesterone + oxidized 2[4Fe-4S]-[ferredoxin] + H2O. Has the capacity to hydroxylate certain steroids in the 15-beta position. Also hydroxylates progesterone in the 11-alpha and 9-beta position. The sequence is that of Cytochrome P450(MEG) (cyp106A2) from Priestia megaterium (Bacillus megaterium).